A 120-amino-acid polypeptide reads, in one-letter code: MREKKSIVSGNAHVIVTFNNVYISVTDHQGNVQGWASSGSVGFKGNKKSTAYAAQSVATTLMTKLKRIGLKILNVHLSGSNPIREAALRAIRNSGIVIISLQDMTPVPHNGVRLRRRRRV.

It belongs to the universal ribosomal protein uS11 family. Part of the 30S ribosomal subunit. Interacts with proteins S7 and S18. Binds to IF-3.

Functionally, located on the platform of the 30S subunit, it bridges several disparate RNA helices of the 16S rRNA. Forms part of the Shine-Dalgarno cleft in the 70S ribosome. The polypeptide is Small ribosomal subunit protein uS11 (Neorickettsia sennetsu (strain ATCC VR-367 / Miyayama) (Ehrlichia sennetsu)).